Consider the following 274-residue polypeptide: Thymidylate synthase (274 aa).

R21 lines the dUMP pocket. A (6R)-5,10-methylene-5,6,7,8-tetrahydrofolate-binding site is contributed by H51. 123–124 (RR) contacts dUMP. C156 functions as the Nucleophile in the catalytic mechanism. DUMP is bound by residues 176 to 179 (RSAD), N187, and 217 to 219 (HIY). D179 provides a ligand contact to (6R)-5,10-methylene-5,6,7,8-tetrahydrofolate. S273 contacts (6R)-5,10-methylene-5,6,7,8-tetrahydrofolate.

The protein belongs to the thymidylate synthase family. Bacterial-type ThyA subfamily. Homodimer.

Its subcellular location is the cytoplasm. It catalyses the reaction dUMP + (6R)-5,10-methylene-5,6,7,8-tetrahydrofolate = 7,8-dihydrofolate + dTMP. It functions in the pathway pyrimidine metabolism; dTTP biosynthesis. Its function is as follows. Catalyzes the reductive methylation of 2'-deoxyuridine-5'-monophosphate (dUMP) to 2'-deoxythymidine-5'-monophosphate (dTMP) while utilizing 5,10-methylenetetrahydrofolate (mTHF) as the methyl donor and reductant in the reaction, yielding dihydrofolate (DHF) as a by-product. This enzymatic reaction provides an intracellular de novo source of dTMP, an essential precursor for DNA biosynthesis. This chain is Thymidylate synthase, found in Francisella tularensis subsp. holarctica (strain FTNF002-00 / FTA).